The following is a 252-amino-acid chain: Proteasome subunit alpha type-7-1B (252 aa).

It belongs to the peptidase T1A family. In terms of assembly, the 26S proteasome consists of a 20S proteasome core and two 19S regulatory subunits. The 20S proteasome core is composed of 28 subunits that are arranged in four stacked rings, resulting in a barrel-shaped structure. The two end rings are each formed by seven alpha subunits, and the two central rings are each formed by seven beta subunits. The catalytic chamber with the active sites is on the inside of the barrel. In terms of tissue distribution, testis specific.

It is found in the cytoplasm. It localises to the nucleus. The proteasome is a multicatalytic proteinase complex which is characterized by its ability to cleave peptides with Arg, Phe, Tyr, Leu, and Glu adjacent to the leaving group at neutral or slightly basic pH. The proteasome has an ATP-dependent proteolytic activity. The protein is Proteasome subunit alpha type-7-1B (Prosalpha4T2) of Drosophila melanogaster (Fruit fly).